The sequence spans 497 residues: O-acetyltransferase PaAT-1 (497 aa).

An N-linked (GlcNAc...) asparagine glycan is attached at N35. Transmembrane regions (helical) follow at residues 69 to 89 (GISATCVVVHHCTLQWFGWHI), 107 to 127 (LLISGSPHVYIFFVISGYSLS), 157 to 177 (LFVPTTIVTFFCAIMTQLNWY), 241 to 261 (LWTLPVEFNSSMVLLMFLMAF), 278 to 298 (VLFQCFFIYWALFLFFSGMLI), 329 to 349 (AIGVGCFVLSLCALSTPHLAF), 375 to 395 (PIAAIGLVLTLDHHPFLQVLF), 406 to 426 (ISFALFLVHGPLLNTLGHALG), and 443 to 463 (VAISLTAMVFWLMTILLADFV).

This sequence belongs to the acyltransferase 3 family.

The protein localises to the membrane. It participates in mycotoxin biosynthesis. Functionally, O-acetyltransferase; part of the 2 gene clusters that mediate the biosynthesis of fusicoccins, diterpene glucosides that display phytohormone-like activity and function as potent activators of plasma membrane H(+)-ATPases in plants by modifying 14-3-3 proteins and cause the plant disease constriction canker. The first step in the pathway is performed by the fusicoccadiene synthase PaFS that possesses both prenyl transferase and terpene cyclase activity, converting isopentenyl diphosphate and dimethylallyl diphosphate into geranylgeranyl diphosphate (GGDP) and successively converting GGDP into fusicocca-2,10(14)-diene, a precursor for fusicoccin H. The second step is the oxidation at the C-8 position by the cytochrome P450 monooxygenase PaP450-2 to yield fusicocca-2,10(14)-diene-8-beta-ol. The cytochrome P450 monooxygenase PaP450-1 then catalyzes the hydroxylation at the C-16 position to produce fusicocca-2,10(14)-diene-8-beta,16-diol. The dioxygenase fc-dox then catalyzes the 16-oxydation of fusicocca-2,10(14)-diene-8-beta,16-diol to yield an aldehyde (8-beta-hydroxyfusicocca-1,10(14)-dien-16-al). The short-chain dehydrogenase/reductase fc-sdr catalyzes the reduction of the aldehyde to yield fusicocca-1,10(14)-diene-8-beta,16-diol. The next step is the hydroxylation at C-9 performed by the cytochrome P450 monooxygenase PaP450-3 that leads to fusicoccin H aglycon which is glycosylated to fusicoccin H by the O-glycosyltransferase PaGT. Hydroxylation at C-12 by the cytochrome P450 monooxygenase PaP450-4 leads then to the production of fusicoccin Q and is followed by methylation by the O-methyltransferase PaMT to yield fusicoccin P. Fusicoccin P is further converted to fusicoccin J via prenylation by the O-glucose prenyltransferase PaPT. Cytochrome P450 monooxygenase PaP450-5 then performs hydroxylation at C-19 to yield dideacetyl-fusicoccin A which is acetylated to 3'-O-deacetyl-fusicoccin A by the O-acetyltransferase PaAT-2. Finally, a another acetylation by the O-acetyltransferase PaAT-1 yields fusicoccin A. This is O-acetyltransferase PaAT-1 from Phomopsis amygdali (Fusicoccum amygdali).